A 232-amino-acid polypeptide reads, in one-letter code: 5'-methylthioadenosine/S-adenosylhomocysteine nucleosidase (232 aa).

Catalysis depends on glutamate 12, which acts as the Proton acceptor. Residues glycine 78, isoleucine 152, and 173-174 (ME) each bind substrate. Residue aspartate 197 is the Proton donor of the active site.

This sequence belongs to the PNP/UDP phosphorylase family. MtnN subfamily. As to quaternary structure, homodimer.

It catalyses the reaction S-adenosyl-L-homocysteine + H2O = S-(5-deoxy-D-ribos-5-yl)-L-homocysteine + adenine. The catalysed reaction is S-methyl-5'-thioadenosine + H2O = 5-(methylsulfanyl)-D-ribose + adenine. The enzyme catalyses 5'-deoxyadenosine + H2O = 5-deoxy-D-ribose + adenine. It functions in the pathway amino-acid biosynthesis; L-methionine biosynthesis via salvage pathway; S-methyl-5-thio-alpha-D-ribose 1-phosphate from S-methyl-5'-thioadenosine (hydrolase route): step 1/2. In terms of biological role, catalyzes the irreversible cleavage of the glycosidic bond in both 5'-methylthioadenosine (MTA) and S-adenosylhomocysteine (SAH/AdoHcy) to adenine and the corresponding thioribose, 5'-methylthioribose and S-ribosylhomocysteine, respectively. Also cleaves 5'-deoxyadenosine, a toxic by-product of radical S-adenosylmethionine (SAM) enzymes, into 5-deoxyribose and adenine. Thus, is required for in vivo function of the radical SAM enzymes biotin synthase and lipoic acid synthase, that are inhibited by 5'-deoxyadenosine accumulation. This Pectobacterium carotovorum subsp. carotovorum (strain PC1) protein is 5'-methylthioadenosine/S-adenosylhomocysteine nucleosidase.